The primary structure comprises 86 residues: Large ribosomal subunit protein bL27 (86 aa).

The interval 1–21 (MAHKKAAGSSRNGRDSESKRL) is disordered.

It belongs to the bacterial ribosomal protein bL27 family.

The chain is Large ribosomal subunit protein bL27 from Hahella chejuensis (strain KCTC 2396).